The sequence spans 165 residues: Putative protein FAM86C2P (165 aa).

The protein belongs to the class I-like SAM-binding methyltransferase superfamily. EEF2KMT family.

This Homo sapiens (Human) protein is Putative protein FAM86C2P (FAM86C2P).